Consider the following 74-residue polypeptide: UPF0154 protein LSL_0542 (74 aa).

Residues isoleucine 5–alanine 25 form a helical membrane-spanning segment.

The protein belongs to the UPF0154 family.

It localises to the cell membrane. The chain is UPF0154 protein LSL_0542 from Ligilactobacillus salivarius (strain UCC118) (Lactobacillus salivarius).